Consider the following 266-residue polypeptide: Thymidylate synthase (266 aa).

Residue R24 coordinates dUMP. H54 provides a ligand contact to (6R)-5,10-methylene-5,6,7,8-tetrahydrofolate. 129-130 (RR) lines the dUMP pocket. C149 (nucleophile) is an active-site residue. Residues 169 to 172 (RSAD), N180, and 210 to 212 (HIY) contribute to the dUMP site. D172 serves as a coordination point for (6R)-5,10-methylene-5,6,7,8-tetrahydrofolate. A265 serves as a coordination point for (6R)-5,10-methylene-5,6,7,8-tetrahydrofolate.

Belongs to the thymidylate synthase family. Bacterial-type ThyA subfamily. As to quaternary structure, homodimer.

The protein resides in the cytoplasm. The catalysed reaction is dUMP + (6R)-5,10-methylene-5,6,7,8-tetrahydrofolate = 7,8-dihydrofolate + dTMP. The protein operates within pyrimidine metabolism; dTTP biosynthesis. Catalyzes the reductive methylation of 2'-deoxyuridine-5'-monophosphate (dUMP) to 2'-deoxythymidine-5'-monophosphate (dTMP) while utilizing 5,10-methylenetetrahydrofolate (mTHF) as the methyl donor and reductant in the reaction, yielding dihydrofolate (DHF) as a by-product. This enzymatic reaction provides an intracellular de novo source of dTMP, an essential precursor for DNA biosynthesis. The chain is Thymidylate synthase from Mycolicibacterium smegmatis (strain ATCC 700084 / mc(2)155) (Mycobacterium smegmatis).